The sequence spans 85 residues: Augerpeptide-s6a (85 aa).

The first 20 residues, 1–20 (MTLTMSTVVFFSLILLTLGL), serve as a signal peptide directing secretion. A propeptide spanning residues 21 to 43 (QPKDKDEGVMGRSRLGKRGLLMR) is cleaved from the precursor. Cystine bridges form between Cys-54–Cys-65, Cys-58–Cys-70, and Cys-64–Cys-81.

As to expression, expressed by the venom duct.

The protein resides in the secreted. This is Augerpeptide-s6a from Terebra subulata (Chocolate spotted auger).